Consider the following 405-residue polypeptide: L-rhamnonate dehydratase (405 aa).

Substrate is bound by residues His33 and Arg59. Mg(2+) is bound by residues Asp226, Glu252, and Glu280. The active-site Proton acceptor is the His329. Glu349 provides a ligand contact to substrate.

Belongs to the mandelate racemase/muconate lactonizing enzyme family. RhamD subfamily. As to quaternary structure, homooctamer; tetramer of dimers. Mg(2+) serves as cofactor.

The enzyme catalyses L-rhamnonate = 2-dehydro-3-deoxy-L-rhamnonate + H2O. Catalyzes the dehydration of L-rhamnonate to 2-keto-3-deoxy-L-rhamnonate (KDR). This is L-rhamnonate dehydratase from Salmonella paratyphi A (strain AKU_12601).